A 107-amino-acid chain; its full sequence is Large ribosomal subunit protein uL24 (107 aa).

It belongs to the universal ribosomal protein uL24 family. In terms of assembly, part of the 50S ribosomal subunit.

In terms of biological role, one of two assembly initiator proteins, it binds directly to the 5'-end of the 23S rRNA, where it nucleates assembly of the 50S subunit. One of the proteins that surrounds the polypeptide exit tunnel on the outside of the subunit. The protein is Large ribosomal subunit protein uL24 of Fervidobacterium nodosum (strain ATCC 35602 / DSM 5306 / Rt17-B1).